The sequence spans 152 residues: Adenosine 5'-monophosphoramidase HNT1 (152 aa).

The HIT domain maps to 8 to 119 (IFCKIIKGEI…IPKKDEATGL (112 aa)). Residues 33-34 (DI), Asn-93, 99-101 (HQV), and 106-108 (HFH) each bind AMP. The Histidine triad motif motif lies at 104-108 (HVHFH). His-106 functions as the Tele-AMP-histidine intermediate in the catalytic mechanism.

Belongs to the HINT family. As to quaternary structure, homodimer. Mg(2+) serves as cofactor.

It carries out the reaction adenosine 5'-phosphoramidate + H2O = AMP + NH4(+). In terms of biological role, hydrolyzes adenosine 5'-monophosphoramidate substrates such as AMP-morpholidate, AMP-N-alanine methyl ester, AMP-alpha-acetyl lysine methyl ester and AMP-NH2. This Candida albicans (strain SC5314 / ATCC MYA-2876) (Yeast) protein is Adenosine 5'-monophosphoramidase HNT1.